Consider the following 282-residue polypeptide: MEMO1 family protein Cmaq_1590 (282 aa).

This sequence belongs to the MEMO1 family.

The polypeptide is MEMO1 family protein Cmaq_1590 (Caldivirga maquilingensis (strain ATCC 700844 / DSM 13496 / JCM 10307 / IC-167)).